A 620-amino-acid chain; its full sequence is Endoglucanase 21 (620 aa).

The tract at residues 1–39 is disordered; the sequence is MYGRDPWGGPLEINAADSMTDDDRSRNLQDLDRATPSRP. Topologically, residues 1–70 are cytoplasmic; the sequence is MYGRDPWGGP…DLGCILVSRK (70 aa). Residues 21 to 39 show a composition bias toward basic and acidic residues; sequence DDDRSRNLQDLDRATPSRP. The chain crosses the membrane as a helical; Signal-anchor for type II membrane protein span at residues 71–91; it reads IFLWTLGTIVVTALLSGFITL. Residues 92 to 620 lie on the Extracellular side of the membrane; it reads IVKTLPHHHH…TPPPPAPWTP (529 aa). Residues asparagine 108 and asparagine 134 are each glycosylated (N-linked (GlcNAc...) asparagine). Aspartate 166 functions as the Nucleophile in the catalytic mechanism. Asparagine 217, asparagine 325, asparagine 346, asparagine 409, asparagine 426, and asparagine 482 each carry an N-linked (GlcNAc...) asparagine glycan. Active-site residues include histidine 514 and aspartate 561. Asparagine 567 is a glycosylation site (N-linked (GlcNAc...) asparagine). The active site involves glutamate 570.

Belongs to the glycosyl hydrolase 9 (cellulase E) family. As to expression, expressed in conductive tissues of young roots, cotyledons, rosette leaves, cauline leaves and sepals. Expressed in the leaf trichome support cells.

The protein localises to the cell membrane. It catalyses the reaction Endohydrolysis of (1-&gt;4)-beta-D-glucosidic linkages in cellulose, lichenin and cereal beta-D-glucans.. The chain is Endoglucanase 21 (KOR3) from Arabidopsis thaliana (Mouse-ear cress).